A 786-amino-acid chain; its full sequence is Probable aminopeptidase 1 (786 aa).

Substrate contacts are provided by residues Glu-103 and 235–239 (GAMEN). Residue His-270 coordinates Zn(2+). Glu-271 serves as the catalytic Proton acceptor. Zn(2+) contacts are provided by His-274 and Glu-293.

Belongs to the peptidase M1 family. Requires Zn(2+) as cofactor.

It localises to the cytoplasm. The protein is Probable aminopeptidase 1 (ape1) of Sulfurisphaera tokodaii (strain DSM 16993 / JCM 10545 / NBRC 100140 / 7) (Sulfolobus tokodaii).